A 188-amino-acid polypeptide reads, in one-letter code: GMP synthase [glutamine-hydrolyzing] subunit A (188 aa).

Residues 2-188 form the Glutamine amidotransferase type-1 domain; sequence KVGLVYYGGQ…FKNFLGVCRK (187 aa). The Nucleophile role is filled by C79. Residues H166 and E168 contribute to the active site.

Heterodimer composed of a glutamine amidotransferase subunit (A) and a GMP-binding subunit (B).

It carries out the reaction XMP + L-glutamine + ATP + H2O = GMP + L-glutamate + AMP + diphosphate + 2 H(+). Its pathway is purine metabolism; GMP biosynthesis; GMP from XMP (L-Gln route): step 1/1. In terms of biological role, catalyzes the synthesis of GMP from XMP. The sequence is that of GMP synthase [glutamine-hydrolyzing] subunit A from Saccharolobus solfataricus (strain ATCC 35092 / DSM 1617 / JCM 11322 / P2) (Sulfolobus solfataricus).